We begin with the raw amino-acid sequence, 197 residues long: Adenylate kinase 1 (197 aa).

19-24 serves as a coordination point for ATP; sequence GSGKGT. The segment at 39-68 is NMP; it reads SSGDLLRAEVQSGSPKGKELKAMMERGELV. AMP is bound by residues Ser-40, Arg-45, 95 to 98, and Gln-102; that span reads GYPR. The LID stretch occupies residues 132-142; it reads KRAETSNRVDD. Residue Arg-133 coordinates ATP. Residues Arg-139 and Arg-150 each contribute to the AMP site. Gly-178 is a binding site for ATP.

It belongs to the adenylate kinase family. AK1 subfamily. As to quaternary structure, monomer. Mg(2+) is required as a cofactor.

It localises to the cytoplasm. It carries out the reaction AMP + ATP = 2 ADP. The protein operates within purine metabolism; purine nucleotide biosynthesis. In terms of biological role, catalyzes the reversible transfer of the terminal phosphate group between ATP and AMP. Plays an important role in cellular energy homeostasis and in adenine nucleotide metabolism. The polypeptide is Adenylate kinase 1 (Schistosoma mansoni (Blood fluke)).